The sequence spans 343 residues: F-box/kelch-repeat protein At3g08810 (343 aa).

The span at 1-15 shows a compositional bias: basic residues; sequence MSYPERKRKRSRWSK. The tract at residues 1–25 is disordered; sequence MSYPERKRKRSRWSKPHSTQNPSPS. Residues 20–66 form the F-box domain; it reads QNPSPSLPDDVLLSIFARVSRLYYPTLSHVSESFRSLLASPELYKAR. 3 Kelch repeats span residues 134–181, 183–224, and 225–271; these read DIYN…VRDG, QGGH…LPDS, and YCVI…VILA.

This Arabidopsis thaliana (Mouse-ear cress) protein is F-box/kelch-repeat protein At3g08810.